Consider the following 78-residue polypeptide: NAD(P)H-quinone oxidoreductase subunit O (78 aa).

Belongs to the complex I NdhO subunit family. In terms of assembly, NDH-1 can be composed of about 15 different subunits; different subcomplexes with different compositions have been identified which probably have different functions.

The protein resides in the cellular thylakoid membrane. The enzyme catalyses a plastoquinone + NADH + (n+1) H(+)(in) = a plastoquinol + NAD(+) + n H(+)(out). It catalyses the reaction a plastoquinone + NADPH + (n+1) H(+)(in) = a plastoquinol + NADP(+) + n H(+)(out). Functionally, NDH-1 shuttles electrons from an unknown electron donor, via FMN and iron-sulfur (Fe-S) centers, to quinones in the respiratory and/or the photosynthetic chain. The immediate electron acceptor for the enzyme in this species is believed to be plastoquinone. Couples the redox reaction to proton translocation, and thus conserves the redox energy in a proton gradient. Cyanobacterial NDH-1 also plays a role in inorganic carbon-concentration. In Prochlorococcus marinus (strain MIT 9301), this protein is NAD(P)H-quinone oxidoreductase subunit O.